A 117-amino-acid chain; its full sequence is Galanin-like peptide (117 aa).

The first 23 residues, 1–23, serve as a signal peptide directing secretion; that stretch reads MACSVHLVLFLTILLSLAETPES. Residues 86–117 constitute a propeptide that is removed on maturation; that stretch reads TMGETFVKANTGDMHILDKNVPKEEATLDSES.

The protein belongs to the galanin family. Isoform 2 is found in brain, thymus and skin. Isoform 2 is found in the skin, in pericytes covering microvascular arterioles and venules on their abluminal surfaces. In larger vessels, isoform 2 is expressed in layers of smooth muscle cells. Isoform 2 is not detected in endothelial cells.

Its subcellular location is the secreted. Hypothalamic neuropeptide which binds to the G-protein-coupled galanin receptors (GALR1, GALR2 and GALR3). Involved in a large number of putative physiological functions in CNS homeostatic processes, including the regulation of gonadotropin-releasing hormone secretion. In terms of biological role, exhibits antimicrobial activity against Gram-negative bacterias, inducing bacterial membrane blebbing. Exhibits potent and dose-dependent vasoconstrictor and anti-edema activity in the cutaneous microvasculature, a physiologic effects which does not appear to be mediated via GALR1 or GALR2. The sequence is that of Galanin-like peptide (Galp) from Mus musculus (Mouse).